We begin with the raw amino-acid sequence, 503 residues long: Nondiscriminating glutamyl-tRNA synthetase EARS2, mitochondrial (503 aa).

The transit peptide at 1–22 (MKILRGVSRQMCTSRPEVRVRF) directs the protein to the mitochondrion. 21 to 23 (RFA) serves as a coordination point for L-glutamate. The 'HIGH' region motif lies at 26-34 (PTGFLHLGG). Histidine 31 lines the ATP pocket. L-glutamate contacts are provided by residues glutamate 57, 209-213 (YHLAS), and arginine 227. Residues glutamate 230 and 265–269 (KLSKR) each bind ATP. The 'KMSKS' region signature appears at 265 to 269 (KLSKR).

It belongs to the class-I aminoacyl-tRNA synthetase family. Glutamate--tRNA ligase type 1 subfamily.

Its subcellular location is the mitochondrion matrix. The enzyme catalyses tRNA(Glx) + L-glutamate + ATP = L-glutamyl-tRNA(Glx) + AMP + diphosphate. It catalyses the reaction tRNA(Glu) + L-glutamate + ATP = L-glutamyl-tRNA(Glu) + AMP + diphosphate. It carries out the reaction tRNA(Gln) + L-glutamate + ATP = L-glutamyl-tRNA(Gln) + AMP + diphosphate. In terms of biological role, non-discriminating glutamyl-tRNA synthetase that catalyzes aminoacylation of both mitochondrial tRNA(Glu) and tRNA(Gln) and participates in RNA aminoacylation for mitochondrial protein translation. Attachs glutamate to tRNA(Glu) or tRNA(Gln) in a two-step reaction: glutamate is first activated by ATP to form Glu-AMP and then transferred to the acceptor end of tRNA(Glu) or tRNA(Gln). The sequence is that of Nondiscriminating glutamyl-tRNA synthetase EARS2, mitochondrial from Danio rerio (Zebrafish).